The chain runs to 288 residues: 4-diphosphocytidyl-2-C-methyl-D-erythritol kinase (288 aa).

Lys-8 is an active-site residue. An ATP-binding site is contributed by 90 to 100 (PFGAGLGGGSS). Asp-132 is a catalytic residue.

The protein belongs to the GHMP kinase family. IspE subfamily.

It catalyses the reaction 4-CDP-2-C-methyl-D-erythritol + ATP = 4-CDP-2-C-methyl-D-erythritol 2-phosphate + ADP + H(+). It participates in isoprenoid biosynthesis; isopentenyl diphosphate biosynthesis via DXP pathway; isopentenyl diphosphate from 1-deoxy-D-xylulose 5-phosphate: step 3/6. Its function is as follows. Catalyzes the phosphorylation of the position 2 hydroxy group of 4-diphosphocytidyl-2C-methyl-D-erythritol. This Chlorobium chlorochromatii (strain CaD3) protein is 4-diphosphocytidyl-2-C-methyl-D-erythritol kinase.